The primary structure comprises 1111 residues: Serine/threonine-protein kinase Nek10 (1111 aa).

A compositionally biased stretch (basic and acidic residues) spans 1–16 (MPDQDTKAKSTEKTAD). Disordered stretches follow at residues 1–24 (MPDQDTKAKSTEKTADKQQGTTTR) and 47–72 (AINFDSAQNNMTKSEPTIRTGGHRAR). The segment covering 47 to 63 (AINFDSAQNNMTKSEPT) has biased composition (polar residues). Positions 481–514 (YKDLVSQLNLLLEDELKQIAENIESINQKKAPLK) form a coiled coil. The Protein kinase domain maps to 519–791 (YAVLDHLGSG…MISDVMMKYL (273 aa)). ATP is bound by residues 525-533 (LGSGAFGCV) and Lys-548. Catalysis depends on Asp-655, which acts as the Proton acceptor.

It belongs to the protein kinase superfamily. NEK Ser/Thr protein kinase family. NIMA subfamily. As to quaternary structure, interacts with RAF1 and MAP2K1; the interaction is direct with RAF1 and required for ERK1/2-signaling pathway activation in response to UV irradiation. The cofactor is Mg(2+). Expressed in the mammary gland, lung, spleen, and kidney.

The catalysed reaction is L-seryl-[protein] + ATP = O-phospho-L-seryl-[protein] + ADP + H(+). It carries out the reaction L-threonyl-[protein] + ATP = O-phospho-L-threonyl-[protein] + ADP + H(+). Plays a role in the cellular response to UV irradiation. Mediates G2/M cell cycle arrest, MEK autoactivation and ERK1/2-signaling pathway activation in response to UV irradiation. In ciliated cells, it is involved in the regulation of mucociliary transport. This Mus musculus (Mouse) protein is Serine/threonine-protein kinase Nek10.